Reading from the N-terminus, the 398-residue chain is Metallophosphoesterase 1 (398 aa).

Residues valine 25 to phenylalanine 45 form a helical membrane-spanning segment. A divalent metal cation is bound by residues aspartate 75, aspartate 117, asparagine 155, histidine 251, histidine 305, and histidine 307. The chain crosses the membrane as a helical span at residues valine 359–glutamine 379. Positions lysine 394–alanine 398 match the Di-lysine motif motif.

The protein belongs to the metallophosphoesterase superfamily. MPPE1 family. The cofactor is Mn(2+).

It localises to the endoplasmic reticulum-Golgi intermediate compartment membrane. Metallophosphoesterase that catalyzes the removal of a side-chain ethanolamine-phosphate (EtNP) from the second mannose of the GPI-anchor protein intermediate. Participates in the glycan remodeling steps of GPI-anchor maturation to allow an efficient transport of GPI-anchor proteins from the endoplasmic reticulum to the Golgi. This is Metallophosphoesterase 1 from Gallus gallus (Chicken).